We begin with the raw amino-acid sequence, 852 residues long: Bifunctional uridylyltransferase/uridylyl-removing enzyme (852 aa).

The tract at residues methionine 1 to isoleucine 318 is uridylyltransferase. A uridylyl-removing region spans residues aspartate 319–phenylalanine 672. The 123-residue stretch at valine 436–leucine 558 folds into the HD domain. 2 consecutive ACT domains span residues glutamine 673–arginine 757 and serine 785–alanine 852.

Belongs to the GlnD family. Requires Mg(2+) as cofactor.

It catalyses the reaction [protein-PII]-L-tyrosine + UTP = [protein-PII]-uridylyl-L-tyrosine + diphosphate. The enzyme catalyses [protein-PII]-uridylyl-L-tyrosine + H2O = [protein-PII]-L-tyrosine + UMP + H(+). With respect to regulation, uridylyltransferase (UTase) activity is inhibited by glutamine, while glutamine activates uridylyl-removing (UR) activity. In terms of biological role, modifies, by uridylylation and deuridylylation, the PII regulatory proteins (GlnB and homologs), in response to the nitrogen status of the cell that GlnD senses through the glutamine level. Under low glutamine levels, catalyzes the conversion of the PII proteins and UTP to PII-UMP and PPi, while under higher glutamine levels, GlnD hydrolyzes PII-UMP to PII and UMP (deuridylylation). Thus, controls uridylylation state and activity of the PII proteins, and plays an important role in the regulation of nitrogen assimilation and metabolism. The chain is Bifunctional uridylyltransferase/uridylyl-removing enzyme from Neisseria gonorrhoeae (strain ATCC 700825 / FA 1090).